A 618-amino-acid polypeptide reads, in one-letter code: Citrolysin protein 1 (618 aa).

Bacterial hemolysins are exotoxins that attack blood cell membranes and cause cell rupture by mechanisms not clearly defined. The protein is Citrolysin protein 1 of Citrobacter freundii.